The sequence spans 217 residues: TLD domain-containing protein 2 (217 aa).

Residues 1-48 (MKSLRWRYTRLPSQVEDALSGEEDKEEEEEKEEETTPAPTPVPEHPMV) are disordered. Over residues 19 to 35 (LSGEEDKEEEEEKEEET) the composition is skewed to acidic residues. The TLDc domain occupies 56-217 (QVLGASEMSQ…ISELEAWVLS (162 aa)).

Belongs to the OXR1 family.

The polypeptide is TLD domain-containing protein 2 (TLDC2) (Bos taurus (Bovine)).